Reading from the N-terminus, the 103-residue chain is Protamine-3 (103 aa).

A disordered region spans residues 1-103 (MGSRCAKLNT…QSPEPKRTPS (103 aa)). Over residues 10 to 21 (TGQSPGHSPGHS) the composition is skewed to low complexity. A compositionally biased stretch (acidic residues) spans 50–66 (GEEEEEEEEEGEEEEKE). Over residues 78-90 (EPERQEEGHKDNA) the composition is skewed to basic and acidic residues. S95 is subject to Phosphoserine.

The protein belongs to the protamine P3 family.

The protein resides in the nucleus. Its subcellular location is the chromosome. Protamines substitute for histones in the chromatin of sperm during the haploid phase of spermatogenesis. They compact sperm DNA into a highly condensed, stable and inactive complex. This Homo sapiens (Human) protein is Protamine-3 (PRM3).